Reading from the N-terminus, the 229-residue chain is NAD-dependent protein deacetylase (229 aa).

Residues Met-1–Ile-229 form the Deacetylase sirtuin-type domain. 10 residues coordinate NAD(+): Ala-20, Arg-32, Gln-96, Ile-98, Asp-99, His-114, Thr-181, Ser-182, Asn-205, and Val-223. Positions 98 and 99 each coordinate nicotinamide. His-114 (proton acceptor) is an active-site residue.

Belongs to the sirtuin family. Class U subfamily.

It localises to the cytoplasm. It carries out the reaction N(6)-acetyl-L-lysyl-[protein] + NAD(+) + H2O = 2''-O-acetyl-ADP-D-ribose + nicotinamide + L-lysyl-[protein]. NAD-dependent protein deacetylase which modulates the activities of several enzymes which are inactive in their acetylated form. This Listeria monocytogenes serotype 4b (strain F2365) protein is NAD-dependent protein deacetylase.